The chain runs to 459 residues: Bifunctional protein GlmU (459 aa).

The tract at residues methionine 1–arginine 230 is pyrophosphorylase. UDP-N-acetyl-alpha-D-glucosamine contacts are provided by residues leucine 9 to glycine 12, lysine 23, glutamine 73, and glycine 78 to threonine 79. Residue aspartate 103 participates in Mg(2+) binding. The UDP-N-acetyl-alpha-D-glucosamine site is built by glycine 140, glutamate 155, asparagine 170, and asparagine 228. Asparagine 228 provides a ligand contact to Mg(2+). The segment at valine 231 to asparagine 251 is linker. An N-acetyltransferase region spans residues glycine 252–serine 459. UDP-N-acetyl-alpha-D-glucosamine contacts are provided by arginine 333 and lysine 351. Histidine 363 serves as the catalytic Proton acceptor. UDP-N-acetyl-alpha-D-glucosamine contacts are provided by tyrosine 366 and asparagine 377. Acetyl-CoA-binding positions include asparagine 386–tyrosine 387, alanine 423, and arginine 440.

The protein in the N-terminal section; belongs to the N-acetylglucosamine-1-phosphate uridyltransferase family. In the C-terminal section; belongs to the transferase hexapeptide repeat family. As to quaternary structure, homotrimer. Mg(2+) is required as a cofactor.

The protein localises to the cytoplasm. The catalysed reaction is alpha-D-glucosamine 1-phosphate + acetyl-CoA = N-acetyl-alpha-D-glucosamine 1-phosphate + CoA + H(+). It catalyses the reaction N-acetyl-alpha-D-glucosamine 1-phosphate + UTP + H(+) = UDP-N-acetyl-alpha-D-glucosamine + diphosphate. It participates in nucleotide-sugar biosynthesis; UDP-N-acetyl-alpha-D-glucosamine biosynthesis; N-acetyl-alpha-D-glucosamine 1-phosphate from alpha-D-glucosamine 6-phosphate (route II): step 2/2. The protein operates within nucleotide-sugar biosynthesis; UDP-N-acetyl-alpha-D-glucosamine biosynthesis; UDP-N-acetyl-alpha-D-glucosamine from N-acetyl-alpha-D-glucosamine 1-phosphate: step 1/1. It functions in the pathway bacterial outer membrane biogenesis; LPS lipid A biosynthesis. In terms of biological role, catalyzes the last two sequential reactions in the de novo biosynthetic pathway for UDP-N-acetylglucosamine (UDP-GlcNAc). The C-terminal domain catalyzes the transfer of acetyl group from acetyl coenzyme A to glucosamine-1-phosphate (GlcN-1-P) to produce N-acetylglucosamine-1-phosphate (GlcNAc-1-P), which is converted into UDP-GlcNAc by the transfer of uridine 5-monophosphate (from uridine 5-triphosphate), a reaction catalyzed by the N-terminal domain. The protein is Bifunctional protein GlmU of Bacillus cereus (strain G9842).